The primary structure comprises 162 residues: MNDVVKVGMADLNVVTPPHTIRTAGLGSCVGVVLYDDVKKVAGMAHIMLPDSALGKKQEFNRAKYADTALDLLLSKLEAIGAKRYSLKAKMAGGAQMFSFASNNDMMRIGQRNVEAVKKKLRELSIPILAEDVGGSNGRTIEFNPETKRLSIRTVHQGEKEI.

The protein belongs to the CheD family. Forms a complex with CheC.

It carries out the reaction L-glutaminyl-[protein] + H2O = L-glutamyl-[protein] + NH4(+). Its function is as follows. Deamidates glutamine residues to glutamate on methyl-accepting chemotaxis receptors (MCPs). CheD-mediated MCP deamidation is required for productive communication of the conformational signals of the chemoreceptors to the CheA kinase. This Halalkalibacterium halodurans (strain ATCC BAA-125 / DSM 18197 / FERM 7344 / JCM 9153 / C-125) (Bacillus halodurans) protein is Chemoreceptor glutamine deamidase CheD.